Here is a 908-residue protein sequence, read N- to C-terminus: DNA mismatch repair protein MutS (908 aa).

662 to 669 (GPNMGGKS) contributes to the ATP binding site.

This sequence belongs to the DNA mismatch repair MutS family.

In terms of biological role, this protein is involved in the repair of mismatches in DNA. It is possible that it carries out the mismatch recognition step. This protein has a weak ATPase activity. In Rhizobium etli (strain ATCC 51251 / DSM 11541 / JCM 21823 / NBRC 15573 / CFN 42), this protein is DNA mismatch repair protein MutS.